The following is a 4391-amino-acid chain: Basement membrane-specific heparan sulfate proteoglycan core protein (4391 aa).

The first 21 residues, 1–21 (MGWRAAGALLLALLLHGRLLA), serve as a signal peptide directing secretion. T42 carries O-linked (GalNAc...) threonine glycosylation. S65, S71, and S76 each carry an O-linked (Xyl...) (heparan sulfate) serine glycan. The region spanning 80-191 (QMVYFRALVN…QGFQFRRLGT (112 aa)) is the SEA domain. N89 is a glycosylation site (N-linked (GlcNAc...) asparagine). 4 consecutive LDL-receptor class A domains span residues 198–235 (ACTE…LNCE), 284–320 (PCGP…LDCG), 324–360 (PCEP…ANCP), and 367–404 (VCGP…FGCM). 12 disulfides stabilise this stretch: C199/C212, C206/C225, C219/C234, C285/C297, C292/C310, C304/C319, C325/C337, C332/C350, C344/C359, C368/C381, C375/C394, and C388/C403. The Ig-like C2-type 1 domain occupies 405–504 (PPQVVTPPRE…VLELVPQRGP (100 aa)). Residues 521–530 (CFCFGITSVC) enclose the Laminin EGF-like 1; first part domain. Positions 538–730 (DQIRLRFDQP…SHGRAHSVEE (193 aa)) constitute a Laminin IV type A 1 domain. An N-linked (GlcNAc...) asparagine glycan is attached at N554. Positions 731–763 (CRCPIGYSGLSCESCDAHFTRVPGGPYLGTCSG) constitute a Laminin EGF-like 1; second part domain. Cystine bridges form between C764–C773, C766–C780, C783–C792, C795–C811, C814–C829, C816–C839, C842–C851, C854–C869, C879–C892, C894–C903, and C906–C921. Laminin EGF-like domains lie at 764–813 (CNCN…SCRP) and 814–871 (CPCP…KCRP). The 45-residue stretch at 879 to 923 (CDERGSMGTSGEACRCKNNVVGRLCNECADGSFHLSTRNPDGCLK) folds into the Laminin EGF-like 4; truncated domain. The 10-residue stretch at 924-933 (CFCMGVSRHC) folds into the Laminin EGF-like 5; first part domain. A Laminin IV type A 2 domain is found at 941-1125 (AQLHGASEEP…GQDPALEVEQ (185 aa)). Positions 1126–1158 (CSCPPGYRGPSCQDCDTGYTRTPSGLYLGTCER) constitute a Laminin EGF-like 5; second part domain. 12 disulfide bridges follow: C1159/C1168, C1161/C1175, C1178/C1187, C1190/C1206, C1209/C1224, C1211/C1234, C1237/C1246, C1249/C1263, C1275/C1287, C1277/C1293, C1295/C1304, and C1307/C1322. Laminin EGF-like domains lie at 1159–1208 (CSCH…DCQL), 1209–1265 (CPCY…PCQR), and 1275–1324 (CNCD…GCLP). A Laminin EGF-like 9; first part domain is found at 1325 to 1334 (CFCMGITQQC). The Laminin IV type A 3 domain maps to 1344–1529 (ISTHFAPGDF…NRPRALEVEE (186 aa)). In terms of domain architecture, Laminin EGF-like 9; second part spans 1530–1562 (CRCPPGYIGLSCQDCAPGYTRTGSGLYLGHCEL). 8 disulfides stabilise this stretch: C1563–C1572, C1565–C1579, C1582–C1591, C1594–C1610, C1613–C1628, C1615–C1638, C1641–C1650, and C1653–C1668. Laminin EGF-like domains lie at 1563-1612 (CECN…DCQP) and 1613-1670 (CACP…QCLP). Ig-like C2-type domains lie at 1677–1771 (LVVE…SKPI), 1772–1865 (TVTV…TLSA), 1866–1955 (PVVS…GGGG), 1956–2051 (PRVQ…ASPP), 2052–2151 (PVKI…PGST), 2152–2244 (RPIR…PGPI), 2245–2340 (PPVR…AGST), 2341–2436 (QPIR…LGVT), 2437–2533 (PTVR…QGVA), 2534–2629 (YPVR…PSVS), 2630–2726 (PPIR…PGSS), 2727–2826 (MPIR…PGGA), 2827–2924 (PPIR…PGLA), 2925–3021 (QPIY…RLRS), 3022–3112 (PVIS…HGPP), 3113–3211 (TVSV…APGA), 3212–3298 (PQVQ…VESP), 3299–3399 (PYAT…AGST), 3400–3488 (PTVQ…ALPS), 3489–3574 (VLIN…LVQA), and 3575–3662 (LPQI…PERV). An N-linked (GlcNAc...) asparagine glycan is attached at N1755. N2121 carries N-linked (GlcNAc...) asparagine glycosylation. Positions 2994–3014 (ASGPGPEQEASFTVTVPPSEG) are disordered. S2995 carries O-linked (Xyl...) (chondroitin sulfate) serine glycosylation. Residues 3003 to 3014 (ASFTVTVPPSEG) show a composition bias toward polar residues. N-linked (GlcNAc...) asparagine glycosylation is found at N3072 and N3105. An N-linked (GlcNAc...) asparagine glycan is attached at N3279. One can recognise a Laminin G-like 1 domain in the interval 3663 to 3843 (VPYFTQTPYS…DLNLTAHGIS (181 aa)). Residues N3780 and N3836 are each glycosylated (N-linked (GlcNAc...) asparagine). 7 disulfides stabilise this stretch: C3819-C3845, C3848-C3859, C3853-C3869, C3871-C3880, C3888-C3899, C3893-C3910, and C3912-C3921. EGF-like domains lie at 3844–3881 (HCPT…SRCE) and 3884–3922 (QALH…LRCE). A Laminin G-like 2 domain is found at 3928-4103 (TTPSLSGAGS…LGSQGIGQCY (176 aa)). S3933 carries an O-linked (Xyl...) (chondroitin sulfate) serine glycan. An N-linked (GlcNAc...) asparagine glycan is attached at N4068. 7 disulfides stabilise this stretch: C4076/C4102, C4108/C4119, C4113/C4129, C4131/C4140, C4147/C4159, C4153/C4164, and C4166/C4175. 2 EGF-like domains span residues 4104–4141 (DSSP…DLCE) and 4143–4176 (EENP…PRCQ). The segment at 4149–4151 (LRE) is mediates motor neuron attachment. O-linked (Xyl...) (chondroitin sulfate) serine glycosylation is found at S4179 and S4193. The Laminin G-like 3 domain occupies 4201–4389 (QYGAYFHDDG…AQAGANTRPC (189 aa)). Residues D4258 and L4275 each coordinate Ca(2+). The tract at residues 4299 to 4301 (LRE) is mediates motor neuron attachment. A4325 and N4327 together coordinate Ca(2+). A disulfide bond links C4355 and C4389. Residues 4364–4391 (ARPGAPPPQPLDLQHRAQAGANTRPCPS) form a disordered region.

In terms of assembly, has a strong tendency to aggregate in dimers or stellate structures. Interacts with other basement membrane components such as laminin, prolargin and collagen type IV. Interacts with COL13A1. Interacts with FGFBP1. Interacts with VWA1. Interacts (via C-terminus) with ECM1 (via C-terminus). Interacts with SVEP1. In terms of processing, proteolytic processing produces the C-terminal angiogenic peptide, endorepellin. This peptide can be further processed to produce the LG3 peptide. Post-translationally, O-glycosylated with core 1 or possibly core 8 glycans. Contains three heparan sulfate chains. Also contains chondroitin sulfate. Detected in cerebrospinal fluid, fibroblasts and urine (at protein level).

Its subcellular location is the secreted. It localises to the extracellular space. The protein localises to the extracellular matrix. The protein resides in the basement membrane. Its function is as follows. Integral component of basement membranes. Component of the glomerular basement membrane (GBM), responsible for the fixed negative electrostatic membrane charge, and which provides a barrier which is both size- and charge-selective. It serves as an attachment substrate for cells. Plays essential roles in vascularization. Critical for normal heart development and for regulating the vascular response to injury. Also required for avascular cartilage development. Anti-angiogenic and anti-tumor peptide that inhibits endothelial cell migration, collagen-induced endothelial tube morphogenesis and blood vessel growth in the chorioallantoic membrane. Blocks endothelial cell adhesion to fibronectin and type I collagen. Anti-tumor agent in neovascularization. Interaction with its ligand, integrin alpha2/beta1, is required for the anti-angiogenic properties. Evokes a reduction in phosphorylation of receptor tyrosine kinases via alpha2/beta1 integrin-mediated activation of the tyrosine phosphatase, PTPN6. In terms of biological role, has anti-angiogenic properties that require binding of calcium ions for full activity. This Homo sapiens (Human) protein is Basement membrane-specific heparan sulfate proteoglycan core protein (HSPG2).